A 366-amino-acid polypeptide reads, in one-letter code: Chorismate synthase (366 aa).

2 residues coordinate NADP(+): Arg-48 and Arg-54. Residues 125 to 127, 238 to 239, Gly-278, 293 to 297, and Arg-319 contribute to the FMN site; these read RSS, NA, and KPTSS.

Belongs to the chorismate synthase family. Homotetramer. The cofactor is FMNH2.

It catalyses the reaction 5-O-(1-carboxyvinyl)-3-phosphoshikimate = chorismate + phosphate. It participates in metabolic intermediate biosynthesis; chorismate biosynthesis; chorismate from D-erythrose 4-phosphate and phosphoenolpyruvate: step 7/7. Catalyzes the anti-1,4-elimination of the C-3 phosphate and the C-6 proR hydrogen from 5-enolpyruvylshikimate-3-phosphate (EPSP) to yield chorismate, which is the branch point compound that serves as the starting substrate for the three terminal pathways of aromatic amino acid biosynthesis. This reaction introduces a second double bond into the aromatic ring system. The polypeptide is Chorismate synthase (Paraburkholderia phymatum (strain DSM 17167 / CIP 108236 / LMG 21445 / STM815) (Burkholderia phymatum)).